A 380-amino-acid polypeptide reads, in one-letter code: 1-deoxy-D-xylulose 5-phosphate reductoisomerase 2 (380 aa).

NADPH is bound by residues serine 10, glycine 11, serine 12, isoleucine 13, glycine 36, lysine 37, asparagine 38, and asparagine 120. Position 121 (lysine 121) interacts with 1-deoxy-D-xylulose 5-phosphate. Glutamate 122 is an NADPH binding site. Residue aspartate 146 coordinates Mn(2+). Residues serine 147, glutamate 148, serine 172, and histidine 195 each contribute to the 1-deoxy-D-xylulose 5-phosphate site. Position 148 (glutamate 148) interacts with Mn(2+). Glycine 201 is a binding site for NADPH. Serine 208, asparagine 213, lysine 214, and glutamate 217 together coordinate 1-deoxy-D-xylulose 5-phosphate. Glutamate 217 provides a ligand contact to Mn(2+).

It belongs to the DXR family. Mg(2+) is required as a cofactor. Requires Mn(2+) as cofactor.

It carries out the reaction 2-C-methyl-D-erythritol 4-phosphate + NADP(+) = 1-deoxy-D-xylulose 5-phosphate + NADPH + H(+). It functions in the pathway isoprenoid biosynthesis; isopentenyl diphosphate biosynthesis via DXP pathway; isopentenyl diphosphate from 1-deoxy-D-xylulose 5-phosphate: step 1/6. In terms of biological role, catalyzes the NADPH-dependent rearrangement and reduction of 1-deoxy-D-xylulose-5-phosphate (DXP) to 2-C-methyl-D-erythritol 4-phosphate (MEP). In Bacillus thuringiensis subsp. konkukian (strain 97-27), this protein is 1-deoxy-D-xylulose 5-phosphate reductoisomerase 2.